Here is a 196-residue protein sequence, read N- to C-terminus: SPRY domain-containing protein 7 (196 aa).

N-acetylalanine is present on alanine 2. Residues 2 to 184 (AASAWCCLRC…FSEFYHTPPP (183 aa)) enclose the B30.2/SPRY domain.

The sequence is that of SPRY domain-containing protein 7 (Spryd7) from Mus musculus (Mouse).